The primary structure comprises 786 residues: Rho GTPase-activating protein 10 (786 aa).

Positions 7–262 constitute a BAR domain; it reads EFSDCYLDSP…IRQNPKDHKR (256 aa). The PH domain occupies 265–372; it reads QFTAEGYLYV…WLEALGGKEA (108 aa). Positions 389–574 constitute a Rho-GAP domain; that stretch reads AQLDKMGFTI…ILIENHEKIF (186 aa). Disordered regions lie at residues 576-608 and 621-727; these read TPPDTTFPEPTCLSASPPNAPPRQSKRQGQRTK and EDGD…PPES. Over residues 599–608 the composition is skewed to basic residues; the sequence is QSKRQGQRTK. Residues 634–651 are compositionally biased toward low complexity; it reads PTSSLDSLSSPSPVTTAV. Positions 676 to 688 are enriched in polar residues; sequence IPGQTRSSMVQWL. The span at 689-712 shows a compositional bias: low complexity; the sequence is NPQSPTTTSSNSAVTPLSPGSSPF. The SH3 domain maps to 728 to 786; it reads IRSRKARAVYPCEAEHSSELSFEIGAIFEDVQTSREPGWLEGTLNGKRGLIPQNYVKLL.

Interacts with PKN3. Interacts with caspase-activated PAK2 proteolytic fragment PAK-2p34; the interaction does not affect GRAF2/ARHGAP10 GTPase activation activity towards RHOA and CDC42. Interacts via its SH3 domain with PTK2/FAK1. Interacts with PTK2B/PYK2; the interaction negatively regulates GRAF2/ARHGAP10 GTPase-activating activity. Interacts with MICAL1 and WDR44; complex formation might transit from GRAF2/ARHGAP10-MICAL1 to GRAF2/ARHGAP10-WDR44 complexes. Post-translationally, phosphorylated. Phosphorylated in vitro by constitutive active PKN3. High levels of expression in heart and skeletal muscle.

It is found in the cytoplasm. The protein localises to the perinuclear region. It localises to the cell membrane. The protein resides in the endosome membrane. In terms of biological role, GTPase-activating protein that catalyzes the conversion of active GTP-bound Rho GTPases to their inactive GDP-bound form, thus suppressing various Rho GTPase-mediated cellular processes. Also converts Cdc42 to an inactive GDP-bound state. Essential for PTKB2 regulation of cytoskeletal organization via Rho family GTPases. Inhibits PAK2 proteolytic fragment PAK-2p34 kinase activity and changes its localization from the nucleus to the perinuclear region. Stabilizes PAK-2p34 thereby increasing stimulation of cell death. Associates with MICAL1 on the endosomal membrane to promote Rab8-Rab10-dependent tubule extension. After dissociation with MICAL1, recruits WDR44 which connects the endoplasmic reticulum (ER) with the endosomal tubule, thereby participating in the export of a subset of neosynthesized proteins. This chain is Rho GTPase-activating protein 10 (ARHGAP10), found in Homo sapiens (Human).